Reading from the N-terminus, the 180-residue chain is Bifunctional bis(5'-adenosyl)-triphosphatase/adenylylsulfatase FHIT (180 aa).

One can recognise an HIT domain in the interval 27 to 134 (SYAFGPYKID…LPRKGGDFEK (108 aa)). Substrate contacts are provided by N52 and Q108. The Histidine triad motif signature appears at 119 to 123 (HVHIH). H121 serves as the catalytic Tele-AMP-histidine intermediate. Residue H123 coordinates substrate.

The catalysed reaction is P(1),P(3)-bis(5'-adenosyl) triphosphate + H2O = AMP + ADP + 2 H(+). It catalyses the reaction adenosine 5'-phosphosulfate + H2O = sulfate + AMP + 2 H(+). It carries out the reaction adenosine 5'-phosphosulfate + NH4(+) = adenosine 5'-phosphoramidate + sulfate + 2 H(+). The enzyme catalyses adenosine 5'-phosphoramidate + H2O = AMP + NH4(+). Possesses dinucleoside triphosphate hydrolase activity. Cleaves P(1)-P(3)-bis(5'-adenosyl) triphosphate (Ap3A) to yield AMP and ADP. Exhibits adenylylsulfatase activity, hydrolyzing adenosine 5'-phosphosulfate to yield AMP and sulfate. Exhibits adenosine 5'-monophosphoramidase activity, hydrolyzing purine nucleotide phosphoramidates with a single phosphate group such as adenosine 5'monophosphoramidate (AMP-NH2) to yield AMP and NH2. Exhibits adenylylsulfate-ammonia adenylyltransferase, catalyzing the ammonolysis of adenosine 5'-phosphosulfate resulting in the formation of adenosine 5'-phosphoramidate. This chain is Bifunctional bis(5'-adenosyl)-triphosphatase/adenylylsulfatase FHIT, found in Arabidopsis thaliana (Mouse-ear cress).